The following is a 452-amino-acid chain: Ribulose bisphosphate carboxylase large chain (452 aa).

A propeptide spanning residues 1 to 2 is cleaved from the precursor; that stretch reads MS. Residue Pro3 is modified to N-acetylproline. Position 14 is an N6,N6,N6-trimethyllysine (Lys14). 2 residues coordinate substrate: Asn123 and Thr173. Lys175 serves as the catalytic Proton acceptor. Substrate is bound at residue Lys177. Residues Lys201, Asp203, and Glu204 each coordinate Mg(2+). The residue at position 201 (Lys201) is an N6-carboxylysine. The Proton acceptor role is filled by His294. Residues Arg295, Xaa327, and Ser379 each coordinate substrate.

The protein belongs to the RuBisCO large chain family. Type I subfamily. As to quaternary structure, heterohexadecamer of 8 large chains and 8 small chains; disulfide-linked. The disulfide link is formed within the large subunit homodimers. Requires Mg(2+) as cofactor. In terms of processing, the disulfide bond which can form in the large chain dimeric partners within the hexadecamer appears to be associated with oxidative stress and protein turnover.

It localises to the plastid. It is found in the chloroplast. The enzyme catalyses 2 (2R)-3-phosphoglycerate + 2 H(+) = D-ribulose 1,5-bisphosphate + CO2 + H2O. It carries out the reaction D-ribulose 1,5-bisphosphate + O2 = 2-phosphoglycolate + (2R)-3-phosphoglycerate + 2 H(+). In terms of biological role, ruBisCO catalyzes two reactions: the carboxylation of D-ribulose 1,5-bisphosphate, the primary event in carbon dioxide fixation, as well as the oxidative fragmentation of the pentose substrate in the photorespiration process. Both reactions occur simultaneously and in competition at the same active site. This is Ribulose bisphosphate carboxylase large chain from Salvadora persica (Toothbrush tree).